Reading from the N-terminus, the 447-residue chain is Protein TIC 40, chloroplastic (447 aa).

A chloroplast-targeting transit peptide spans Met-1–Cys-43. The N-terminal 33 residues, Ser-44 to Ala-76, are a transit peptide targeting the chloroplast; inner membrane. Residues Ser-77–Thr-104 are Chloroplast intermembrane-facing. The chain crosses the membrane as a helical span at residues Ile-105–Val-125. Over Thr-126–Gly-447 the chain is Stromal. Residues Gln-148–Gly-160 show a composition bias toward low complexity. Disordered stretches follow at residues Gln-148–Val-214 and Lys-231–Pro-261. Residues Ser-161–Thr-171 show a composition bias toward pro residues. Low complexity predominate over residues Ser-172–Gly-186. STI1 domains lie at Asp-310 to Leu-344 and Pro-386 to Tyr-425.

Part of the Tic complex. Interacts with HSP93, TIC110 and LTD. Expressed in seedlings, flowers, leaves, stems and roots.

The protein localises to the plastid. The protein resides in the chloroplast inner membrane. Its function is as follows. Involved in protein precursor import into chloroplasts. Part of the motor complex consisting of a co-chaperone (TIC40) and a chaperone (HSP93) associated with the import channel (TIC110). Causes the release of bound transit peptides from TIC110 and stimulates ATP hydrolysis by HSP93. Involved in reinsertion of proteins from the chloroplast stroma into the inner membrane. This is Protein TIC 40, chloroplastic (TIC40) from Arabidopsis thaliana (Mouse-ear cress).